A 155-amino-acid chain; its full sequence is Ciliary microtubule inner protein 2C (155 aa).

This sequence belongs to the CIMIP2 family.

Its subcellular location is the cytoplasm. The protein resides in the cytoskeleton. It localises to the cilium axoneme. Functionally, microtubule inner protein (MIP) part of the dynein-decorated doublet microtubules (DMTs) in cilia axoneme, which is required for motile cilia beating. This is Ciliary microtubule inner protein 2C (cimip2cb) from Xenopus laevis (African clawed frog).